The primary structure comprises 256 residues: 1-(5-phosphoribosyl)-5-[(5-phosphoribosylamino)methylideneamino] imidazole-4-carboxamide isomerase (256 aa).

The active-site Proton acceptor is aspartate 8. Aspartate 129 functions as the Proton donor in the catalytic mechanism.

Belongs to the HisA/HisF family.

It is found in the cytoplasm. It carries out the reaction 1-(5-phospho-beta-D-ribosyl)-5-[(5-phospho-beta-D-ribosylamino)methylideneamino]imidazole-4-carboxamide = 5-[(5-phospho-1-deoxy-D-ribulos-1-ylimino)methylamino]-1-(5-phospho-beta-D-ribosyl)imidazole-4-carboxamide. Its pathway is amino-acid biosynthesis; L-histidine biosynthesis; L-histidine from 5-phospho-alpha-D-ribose 1-diphosphate: step 4/9. This Prochlorococcus marinus (strain NATL2A) protein is 1-(5-phosphoribosyl)-5-[(5-phosphoribosylamino)methylideneamino] imidazole-4-carboxamide isomerase.